Reading from the N-terminus, the 148-residue chain is MVKPRLVFLSIAGPKDEQLYLEIIDPKEKHLLARYQYLGELSLDVINDLVNDGERTSNDCFLGLLGVEEDISTYAFYSNTKVKFILAVKAPDYVVKETEIRQLLRRIYTIHTHAVCNPFSMDLTPETLKTSIYFKESLHQLISDWNIH.

This is an uncharacterized protein from Schizosaccharomyces pombe (strain 972 / ATCC 24843) (Fission yeast).